A 721-amino-acid polypeptide reads, in one-letter code: Centlein (721 aa).

The stretch at 52 to 164 forms a coiled coil; it reads KNEKAISEQT…LRDENEEVVN (113 aa). Disordered stretches follow at residues 156 to 180 and 259 to 288; these read RDENEEVVNPEEKEHCPTDKAKSEM and ETSQNIRPIENDGNQKETDQTEDSRAQQEV. Composition is skewed to basic and acidic residues over residues 165–178 and 267–284; these read PEEKEHCPTDKAKS and IENDGNQKETDQTEDSRA. Coiled-coil stretches lie at residues 345–515 and 573–626; these read LLRE…EDLK and QSEQ…TQKS. Residue Thr-658 is modified to Phosphothreonine.

Interacts with CEP250 and CEP68. Interacts with NEK2; the interaction leads to phosphorylation of CNTLN. In terms of processing, phosphorylated directly or indirectly by NEK2.

The protein localises to the cytoplasm. The protein resides in the cytoskeleton. Its subcellular location is the microtubule organizing center. It localises to the centrosome. It is found in the centriole. Its function is as follows. Required for centrosome cohesion and recruitment of CEP68 to centrosomes. The polypeptide is Centlein (Rattus norvegicus (Rat)).